Here is a 322-residue protein sequence, read N- to C-terminus: RING finger protein 113B (322 aa).

Residues 24-92 form a disordered region; sequence KPGRKGAAGL…EEAAPESLDV (69 aa). Residues 46-60 show a composition bias toward low complexity; that stretch reads SSSSGDEGDTVAQPP. The segment at 190–218 adopts a C3H1-type zinc-finger fold; sequence DYQPDICKDYKETGFCGFGDSCKFLHDRS. An RING-type zinc finger spans residues 256-294; sequence CFICRQAFQNPVVTKCRHYFCESCALEHFRATPRCYICD.

In Homo sapiens (Human), this protein is RING finger protein 113B (RNF113B).